The following is a 354-amino-acid chain: Protein-glutamate methylesterase/protein-glutamine glutaminase (354 aa).

The Response regulatory domain maps to Arg-6–Ala-123. The residue at position 57 (Asp-57) is a 4-aspartylphosphate. The CheB-type methylesterase domain maps to Ala-159–Arg-351. Catalysis depends on residues Ser-171, His-197, and Asp-293.

The protein belongs to the CheB family. In terms of processing, phosphorylated by CheA. Phosphorylation of the N-terminal regulatory domain activates the methylesterase activity.

The protein localises to the cytoplasm. It catalyses the reaction [protein]-L-glutamate 5-O-methyl ester + H2O = L-glutamyl-[protein] + methanol + H(+). The enzyme catalyses L-glutaminyl-[protein] + H2O = L-glutamyl-[protein] + NH4(+). Involved in chemotaxis. Part of a chemotaxis signal transduction system that modulates chemotaxis in response to various stimuli. Catalyzes the demethylation of specific methylglutamate residues introduced into the chemoreceptors (methyl-accepting chemotaxis proteins or MCP) by CheR. Also mediates the irreversible deamidation of specific glutamine residues to glutamic acid. The sequence is that of Protein-glutamate methylesterase/protein-glutamine glutaminase from Bdellovibrio bacteriovorus (strain ATCC 15356 / DSM 50701 / NCIMB 9529 / HD100).